We begin with the raw amino-acid sequence, 505 residues long: L-arabinose isomerase (505 aa).

Glu-310, Glu-337, His-354, and His-453 together coordinate Mn(2+).

This sequence belongs to the arabinose isomerase family. It depends on Mn(2+) as a cofactor.

It carries out the reaction beta-L-arabinopyranose = L-ribulose. It functions in the pathway carbohydrate degradation; L-arabinose degradation via L-ribulose; D-xylulose 5-phosphate from L-arabinose (bacterial route): step 1/3. Catalyzes the conversion of L-arabinose to L-ribulose. This Clavibacter sepedonicus (Clavibacter michiganensis subsp. sepedonicus) protein is L-arabinose isomerase.